Reading from the N-terminus, the 205-residue chain is Protein phosphatase inhibitor 2 (205 aa).

The segment at 1-44 (MAASTASHRPIKGILKNKTSTTSSVVASAEQPRRTVEEELSKKS) is disordered. N-acetylalanine is present on Ala2. Residues 12–17 (KGILKN) form a required for binding PPP1CC region. The span at 19 to 29 (TSTTSSVVASA) shows a compositional bias: low complexity. Residues 31–44 (QPRRTVEEELSKKS) are compositionally biased toward basic and acidic residues. The interval 43–55 (KSQKWDEMNILAT) is required for binding PPP1CC. Ser44 is subject to Phosphoserine; by ATM. Position 73 is a phosphothreonine; by GSK3 (Thr73). Phosphoserine occurs at positions 87 and 89. A phosphothreonine mark is found at Thr96 and Thr116. A disordered region spans residues 104 to 142 (LAAAEGSEPKFRTREQESSGEEDNDLSPEEREKKRQFEM). Over residues 110–120 (SEPKFRTREQE) the composition is skewed to basic and acidic residues. Ser121, Ser122, and Ser130 each carry phosphoserine. Positions 121–130 (SSGEEDNDLS) are enriched in acidic residues. The segment covering 131-142 (PEEREKKRQFEM) has biased composition (basic and acidic residues). The tract at residues 147–150 (HYNE) is required for binding PPP1CC catalytic center, displacing metal ions and inhibition of PPP1CC catalytic activity. Residues 163-205 (KDLHDDDEDEEMSETADADSMNIEESNQGSTAGDHLQHKSQSS) form a disordered region. The span at 167 to 179 (DDDEDEEMSETAD) shows a compositional bias: acidic residues.

It belongs to the protein phosphatase inhibitor 2 family. In terms of assembly, heterodimer with PP1. Post-translationally, phosphorylation on Ser-44 by ATM activates PP1 by dissociating the PP1-PPP1R2 complex. Phosphorylation on Thr-73 by GSK3 activates PP1 by dissociating the PP1-PPP1R2 complex. Central nervous system.

Its function is as follows. Inhibitor of protein-phosphatase 1. This is Protein phosphatase inhibitor 2 (Ppp1r2) from Rattus norvegicus (Rat).